A 414-amino-acid polypeptide reads, in one-letter code: Serine/threonine transporter SstT (414 aa).

Residues 2–15 lie on the Cytoplasmic side of the membrane; the sequence is TTQRSPGLFRRLAH. Residues 16–36 traverse the membrane as a helical segment; sequence GSLVKQILVGLVLGILLAWIS. Residues 37-45 are Periplasmic-facing; sequence KPAAEAVGL. Residues 46 to 66 traverse the membrane as a helical segment; sequence LGTLFVGALKAVAPILVLMLV. The Cytoplasmic segment spans residues 67–83; the sequence is MASIANHQHGQKTNILP. Residues 84–104 form a helical membrane-spanning segment; sequence ILFLYLLGTFSAALAAVVFSF. Over 105 to 142 the chain is Periplasmic; sequence AFPSTLHLSSSAGDISPPSGIVEVMRGLVMSMVSNPID. Residues 143–163 form a helical membrane-spanning segment; sequence ALLKGNYIGILVWAIGLGFAL. Residues 164–179 are Cytoplasmic-facing; it reads RHGNETTKNLVNDMSN. Residues 180 to 200 form a helical membrane-spanning segment; that stretch reads AVTFMVKLVIRFAPIGIFGLV. The Periplasmic segment spans residues 201 to 217; it reads SSTLATTGFSTLWGYAQ. Residues 218–238 traverse the membrane as a helical segment; it reads LLVVLVGCMLLVALVVNPLLV. At 239-299 the chain is on the cytoplasmic side; that stretch reads WWKIRRNPFP…VSIPLGATIN (61 aa). Residues 300-320 form a helical membrane-spanning segment; the sequence is MAGAAITITVLTLAAVNTLGI. Residues 321 to 331 lie on the Periplasmic side of the membrane; the sequence is PVDLPTALLLS. Residues 332–352 traverse the membrane as a helical segment; that stretch reads VVASLCACGASGVAGGSLLLI. Residues 353-414 lie on the Cytoplasmic side of the membrane; sequence PLACNMFGIS…DRLANSALRN (62 aa).

The protein belongs to the dicarboxylate/amino acid:cation symporter (DAACS) (TC 2.A.23) family.

Its subcellular location is the cell inner membrane. The enzyme catalyses L-serine(in) + Na(+)(in) = L-serine(out) + Na(+)(out). The catalysed reaction is L-threonine(in) + Na(+)(in) = L-threonine(out) + Na(+)(out). Its function is as follows. Involved in the import of serine and threonine into the cell, with the concomitant import of sodium (symport system). This Shigella dysenteriae serotype 1 (strain Sd197) protein is Serine/threonine transporter SstT.